Here is a 20-residue protein sequence, read N- to C-terminus: AEVFKSEEGSVDFYGQLRPA.

This sequence belongs to the Gram-negative porin family. Homotrimer.

It is found in the cell outer membrane. Forms pores that allow passive diffusion of small molecules across the outer membrane. This Vibrio alginolyticus protein is Outer membrane protein 40Va.